A 293-amino-acid polypeptide reads, in one-letter code: Homoserine kinase (293 aa).

83 to 93 (PITRGMGSSSA) contacts ATP.

It belongs to the GHMP kinase family. Homoserine kinase subfamily.

Its subcellular location is the cytoplasm. The enzyme catalyses L-homoserine + ATP = O-phospho-L-homoserine + ADP + H(+). Its pathway is amino-acid biosynthesis; L-threonine biosynthesis; L-threonine from L-aspartate: step 4/5. In terms of biological role, catalyzes the ATP-dependent phosphorylation of L-homoserine to L-homoserine phosphate. This chain is Homoserine kinase, found in Helicobacter pylori (strain J99 / ATCC 700824) (Campylobacter pylori J99).